The following is a 126-amino-acid chain: Small ribosomal subunit protein uS12 (126 aa).

The disordered stretch occupies residues Met-1–Gln-29. 3-methylthioaspartic acid is present on Asp-89.

Belongs to the universal ribosomal protein uS12 family. Part of the 30S ribosomal subunit. Contacts proteins S8 and S17. May interact with IF1 in the 30S initiation complex.

With S4 and S5 plays an important role in translational accuracy. Functionally, interacts with and stabilizes bases of the 16S rRNA that are involved in tRNA selection in the A site and with the mRNA backbone. Located at the interface of the 30S and 50S subunits, it traverses the body of the 30S subunit contacting proteins on the other side and probably holding the rRNA structure together. The combined cluster of proteins S8, S12 and S17 appears to hold together the shoulder and platform of the 30S subunit. In Protochlamydia amoebophila (strain UWE25), this protein is Small ribosomal subunit protein uS12.